The chain runs to 175 residues: Macro domain-containing protein TTE0995 (175 aa).

The region spanning 1–174 is the Macro domain; that stretch reads MKEKIKLIKG…VYSKAYEELD (174 aa).

Belongs to the MacroD-type family.

The chain is Macro domain-containing protein TTE0995 from Caldanaerobacter subterraneus subsp. tengcongensis (strain DSM 15242 / JCM 11007 / NBRC 100824 / MB4) (Thermoanaerobacter tengcongensis).